A 288-amino-acid chain; its full sequence is Probable aquaporin PIP1-2 (288 aa).

A disordered region spans residues 1 to 37 (MEGKEEDVRLGANKFSERQPIGTAAQGSDDKDYKEPP). The next 2 membrane-spanning stretches (helical) occupy residues 57 to 77 (IAEF…VMGV) and 92 to 114 (IAWS…SGGH). An NPA 1 motif is present at residues 116–118 (NPA). The next 3 helical transmembrane spans lie at 135 to 155 (LFYM…VKGF), 177 to 197 (GDGL…VFSA), and 211 to 231 (ILAP…TIPI). The short motif at 237 to 239 (NPA) is the NPA 2 element. Residues 259 to 279 (IFWVGPFIGAALAAIYHQVVI) form a helical membrane-spanning segment.

It belongs to the MIP/aquaporin (TC 1.A.8) family. PIP (TC 1.A.8.11) subfamily. As to expression, expressed in roots, leaves and anthers.

It is found in the cell membrane. In terms of biological role, aquaporins facilitate the transport of water and small neutral solutes across cell membranes. This is Probable aquaporin PIP1-2 (PIP1-2) from Oryza sativa subsp. japonica (Rice).